Here is a 382-residue protein sequence, read N- to C-terminus: MHGRRHLAASLARALTYAPSRSISSTPSLLQTLDPSTPSPAAAPPTAGRLAELRQRLQADAPSLGDFTYSVEVGTRKKPLPKPKWMKETIPGGAKYAGIKAKLRELKLHTVCEEARCPNLGECWSGGETGTATATIMILGDTCTRGCRFCNVKTSRTPPPPDPDEPSNVAQAIASWGLEYIVITSVDRDDLPDQGSGHFAETVQKLKVLKPEMLIEALVPDFRGDPACVEKVATSGLHVFAHNIETVEELQRNVRDHRANFKQSIDVLKLAKEYAPAGTLTKTSIMLGCGETPDQVISTTEKVRAAGVDVMTFGQYMRPSKRHMPVSEYVTPEAFERYRSLGVDMGFRYVASGPMVRSSYKAGEFYIKAMIEADRAKATTAI.

The transit peptide at 1–30 directs the protein to the mitochondrion; that stretch reads MHGRRHLAASLARALTYAPSRSISSTPSLL. The segment covering 25-34 has biased composition (polar residues); that stretch reads STPSLLQTLD. A disordered region spans residues 25-46; sequence STPSLLQTLDPSTPSPAAAPPT. [4Fe-4S] cluster-binding residues include Cys-112, Cys-117, Cys-123, Cys-143, Cys-147, Cys-150, and Ser-359. In terms of domain architecture, Radical SAM core spans 128-348; it reads ETGTATATIM…RSLGVDMGFR (221 aa).

This sequence belongs to the radical SAM superfamily. Lipoyl synthase family. [4Fe-4S] cluster is required as a cofactor.

The protein resides in the mitochondrion. It catalyses the reaction [[Fe-S] cluster scaffold protein carrying a second [4Fe-4S](2+) cluster] + N(6)-octanoyl-L-lysyl-[protein] + 2 oxidized [2Fe-2S]-[ferredoxin] + 2 S-adenosyl-L-methionine + 4 H(+) = [[Fe-S] cluster scaffold protein] + N(6)-[(R)-dihydrolipoyl]-L-lysyl-[protein] + 4 Fe(3+) + 2 hydrogen sulfide + 2 5'-deoxyadenosine + 2 L-methionine + 2 reduced [2Fe-2S]-[ferredoxin]. Its pathway is protein modification; protein lipoylation via endogenous pathway; protein N(6)-(lipoyl)lysine from octanoyl-[acyl-carrier-protein]: step 2/2. Functionally, catalyzes the radical-mediated insertion of two sulfur atoms into the C-6 and C-8 positions of the octanoyl moiety bound to the lipoyl domains of lipoate-dependent enzymes, thereby converting the octanoylated domains into lipoylated derivatives. This chain is Lipoyl synthase, mitochondrial, found in Oryza sativa subsp. japonica (Rice).